The primary structure comprises 90 residues: Phosphoribosyl-ATP pyrophosphatase (90 aa).

It belongs to the PRA-PH family.

The protein resides in the cytoplasm. It carries out the reaction 1-(5-phospho-beta-D-ribosyl)-ATP + H2O = 1-(5-phospho-beta-D-ribosyl)-5'-AMP + diphosphate + H(+). Its pathway is amino-acid biosynthesis; L-histidine biosynthesis; L-histidine from 5-phospho-alpha-D-ribose 1-diphosphate: step 2/9. This chain is Phosphoribosyl-ATP pyrophosphatase, found in Streptomyces avermitilis (strain ATCC 31267 / DSM 46492 / JCM 5070 / NBRC 14893 / NCIMB 12804 / NRRL 8165 / MA-4680).